Consider the following 315-residue polypeptide: DNA-directed RNA polymerase subunit alpha (315 aa).

An alpha N-terminal domain (alpha-NTD) region spans residues 1-228 (MIGMEKPKIE…EHLELFISLT (228 aa)). The interval 245-315 (RNKLMEMTIE…FGLSLRQPDD (71 aa)) is alpha C-terminal domain (alpha-CTD).

Belongs to the RNA polymerase alpha chain family. Homodimer. The RNAP catalytic core consists of 2 alpha, 1 beta, 1 beta' and 1 omega subunit. When a sigma factor is associated with the core the holoenzyme is formed, which can initiate transcription.

The catalysed reaction is RNA(n) + a ribonucleoside 5'-triphosphate = RNA(n+1) + diphosphate. Functionally, DNA-dependent RNA polymerase catalyzes the transcription of DNA into RNA using the four ribonucleoside triphosphates as substrates. The protein is DNA-directed RNA polymerase subunit alpha of Symbiobacterium thermophilum (strain DSM 24528 / JCM 14929 / IAM 14863 / T).